The sequence spans 89 residues: Small ribosomal subunit protein bS20 (89 aa).

Residues 1–10 (MKNRSAIKRH) show a composition bias toward basic residues. Residues 1–30 (MKNRSAIKRHNQSEVRRMRNRSAKSEVRTT) are disordered. The segment covering 11 to 30 (NQSEVRRMRNRSAKSEVRTT) has biased composition (basic and acidic residues).

Belongs to the bacterial ribosomal protein bS20 family.

In terms of biological role, binds directly to 16S ribosomal RNA. The sequence is that of Small ribosomal subunit protein bS20 from Treponema denticola (strain ATCC 35405 / DSM 14222 / CIP 103919 / JCM 8153 / KCTC 15104).